The following is a 225-amino-acid chain: PKHD-type hydroxylase Smlt1146 (225 aa).

A Fe2OG dioxygenase domain is found at 78-177 (KYLPPRFNRY…RVASFFWVQS (100 aa)). Fe cation-binding residues include H96, D98, and H158. A 2-oxoglutarate-binding site is contributed by R168.

Fe(2+) serves as cofactor. Requires L-ascorbate as cofactor.

The sequence is that of PKHD-type hydroxylase Smlt1146 from Stenotrophomonas maltophilia (strain K279a).